A 265-amino-acid chain; its full sequence is Undecaprenyl-diphosphatase (265 aa).

A run of 7 helical transmembrane segments spans residues 42–62 (AATF…VLYW), 82–102 (GIVL…LLHA), 108–128 (LFRP…MILV), 157–177 (LALW…MLLG), 181–201 (PLAA…ATGY), 217–237 (FFLV…KVFV), and 244–264 (TLIP…YFMV).

The protein belongs to the UppP family.

It is found in the cell inner membrane. The catalysed reaction is di-trans,octa-cis-undecaprenyl diphosphate + H2O = di-trans,octa-cis-undecaprenyl phosphate + phosphate + H(+). Functionally, catalyzes the dephosphorylation of undecaprenyl diphosphate (UPP). Confers resistance to bacitracin. This chain is Undecaprenyl-diphosphatase, found in Desulfovibrio desulfuricans (strain ATCC 27774 / DSM 6949 / MB).